The chain runs to 124 residues: Small ribosomal subunit protein uS13 (124 aa).

A compositionally biased stretch (basic residues) spans 103 to 117 (KCNARTRKGPRKTVA). Positions 103–124 (KCNARTRKGPRKTVANKKIETK) are disordered.

The protein belongs to the universal ribosomal protein uS13 family. Part of the 30S ribosomal subunit. Forms a loose heterodimer with protein S19. Forms two bridges to the 50S subunit in the 70S ribosome.

Functionally, located at the top of the head of the 30S subunit, it contacts several helices of the 16S rRNA. In the 70S ribosome it contacts the 23S rRNA (bridge B1a) and protein L5 of the 50S subunit (bridge B1b), connecting the 2 subunits; these bridges are implicated in subunit movement. Contacts the tRNAs in the A and P-sites. The sequence is that of Small ribosomal subunit protein uS13 from Malacoplasma penetrans (strain HF-2) (Mycoplasma penetrans).